The following is a 418-amino-acid chain: 3-deoxy-D-manno-octulosonic acid transferase (418 aa).

A helical; Signal-anchor membrane pass occupies residues 7–27; the sequence is FLSFLLLPIYFVIIFIRLLIG. The Proton acceptor role is filled by Glu-60. Residues 264 to 265, 305 to 307, and 330 to 333 contribute to the CMP site; these read PR, FGE, and NILE.

Belongs to the glycosyltransferase group 1 family. Glycosyltransferase 30 subfamily.

It is found in the cell inner membrane. The catalysed reaction is lipid IVA (E. coli) + CMP-3-deoxy-beta-D-manno-octulosonate = alpha-Kdo-(2-&gt;6)-lipid IVA (E. coli) + CMP + H(+). It participates in bacterial outer membrane biogenesis; LPS core biosynthesis. In terms of biological role, involved in lipopolysaccharide (LPS) biosynthesis. Catalyzes the transfer of 3-deoxy-D-manno-octulosonate (Kdo) residue(s) from CMP-Kdo to lipid IV(A), the tetraacyldisaccharide-1,4'-bisphosphate precursor of lipid A. The sequence is that of 3-deoxy-D-manno-octulosonic acid transferase (waaA) from Rickettsia bellii (strain RML369-C).